A 145-amino-acid polypeptide reads, in one-letter code: Large ribosomal subunit protein uL15 (145 aa).

The segment covering 1–30 has biased composition (basic residues); sequence MAHSLRKTRKLRGHVSHGHGRIGKHRKHPG. The tract at residues 1–48 is disordered; that stretch reads MAHSLRKTRKLRGHVSHGHGRIGKHRKHPGGRGNAGGQHHHRINRDKY.

The protein belongs to the universal ribosomal protein uL15 family. In terms of assembly, component of the large ribosomal subunit.

It is found in the cytoplasm. It localises to the cytosol. The protein resides in the rough endoplasmic reticulum. Component of the large ribosomal subunit. The sequence is that of Large ribosomal subunit protein uL15 (rpl-27a) from Oscheius tipulae.